Here is a 201-residue protein sequence, read N- to C-terminus: 3-isopropylmalate dehydratase small subunit (201 aa).

This sequence belongs to the LeuD family. LeuD type 1 subfamily. In terms of assembly, heterodimer of LeuC and LeuD.

It catalyses the reaction (2R,3S)-3-isopropylmalate = (2S)-2-isopropylmalate. The protein operates within amino-acid biosynthesis; L-leucine biosynthesis; L-leucine from 3-methyl-2-oxobutanoate: step 2/4. In terms of biological role, catalyzes the isomerization between 2-isopropylmalate and 3-isopropylmalate, via the formation of 2-isopropylmaleate. The chain is 3-isopropylmalate dehydratase small subunit from Salmonella arizonae (strain ATCC BAA-731 / CDC346-86 / RSK2980).